A 139-amino-acid chain; its full sequence is Putative pre-16S rRNA nuclease (139 aa).

It belongs to the YqgF nuclease family.

Its subcellular location is the cytoplasm. In terms of biological role, could be a nuclease involved in processing of the 5'-end of pre-16S rRNA. The protein is Putative pre-16S rRNA nuclease of Streptococcus pyogenes serotype M2 (strain MGAS10270).